Here is a 208-residue protein sequence, read N- to C-terminus: Somatotropin-B (208 aa).

A signal peptide spans 1–25 (MVPGSCSSFGLLVILSFQNVPDVGG). Zn(2+) is bound at residue His-44. Cysteines 77 and 181 form a disulfide. Glu-190 provides a ligand contact to Zn(2+). Residues Cys-198 and Cys-206 are joined by a disulfide bond.

Belongs to the somatotropin/prolactin family.

The protein resides in the secreted. Functionally, growth hormone plays an important role in growth control. This Xenopus laevis (African clawed frog) protein is Somatotropin-B (gh-b).